A 150-amino-acid polypeptide reads, in one-letter code: Large ribosomal subunit protein uL11 (150 aa).

The protein belongs to the universal ribosomal protein uL11 family. As to quaternary structure, part of the ribosomal stalk of the 50S ribosomal subunit. Interacts with L10 and the large rRNA to form the base of the stalk. L10 forms an elongated spine to which L12 dimers bind in a sequential fashion forming a multimeric L10(L12)X complex. Post-translationally, one or more lysine residues are methylated.

In terms of biological role, forms part of the ribosomal stalk which helps the ribosome interact with GTP-bound translation factors. This Cereibacter sphaeroides (strain ATCC 17025 / ATH 2.4.3) (Rhodobacter sphaeroides) protein is Large ribosomal subunit protein uL11.